The primary structure comprises 590 residues: Leucine-rich repeat transmembrane neuronal protein 4 (590 aa).

An N-terminal signal peptide occupies residues 1–30; sequence MGFRLITQLKGMSVFLVLFPTLLLVMLTGA. The region spanning 31-61 is the LRRNT domain; sequence QRACPKNCRCDGKIVYCESHAFADIPENISG. Residues 31-424 lie on the Extracellular side of the membrane; sequence QRACPKNCRC…HEYEHVSFHK (394 aa). N58 is a glycosylation site (N-linked (GlcNAc...) asparagine). LRR repeat units follow at residues 62-83, 86-107, 110-131, 134-155, 158-179, 182-203, 206-226, 230-251, 254-275, and 278-299; these read GSQGLSLRFNSIQKLKSNQFAG, QLIWLYLDHNYISSVDEDAFQG, RLKELILSSNKITYLHNKTFHP, NLRNLDLSYNKLQTLQSEQFKG, KLIILHLRSNSLKTVPIRVFQD, NLDFLDLGYNRLRSLSRNAFAG, KLKELHLEHNQFSKINFAHFP, NLRSIYLQWNRIRSVSQGLTWT, SLHTLDLSGNDIQAIEPGTFKC, and NLQKLNLDSNKLTNVSQETVNA. A glycan (N-linked (GlcNAc...) asparagine) is linked at N126. The N-linked (GlcNAc...) asparagine glycan is linked to N291. The region spanning 311–362 is the LRRCT domain; that stretch reads NMWECSRSICPLFYWLKNFKGNKESTMICAGPKHIQGEKVSDAVETYNICSD. A helical transmembrane segment spans residues 425–445; that stretch reads IIAGSVALFLSVAMILLVIYV. The Cytoplasmic segment spans residues 446 to 590; sequence SWKRYPASMK…PAIYLERITN (145 aa).

Belongs to the LRRTM family. Peripherally associated with AMPAR complex. AMPAR complex consists of an inner core made of 4 pore-forming GluA/GRIA proteins (GRIA1, GRIA2, GRIA3 and GRIA4) and 4 major auxiliary subunits arranged in a twofold symmetry. One of the two pairs of distinct binding sites is occupied either by CNIH2, CNIH3 or CACNG2, CACNG3. The other harbors CACNG2, CACNG3, CACNG4, CACNG8 or GSG1L. This inner core of AMPAR complex is complemented by outer core constituents binding directly to the GluA/GRIA proteins at sites distinct from the interaction sites of the inner core constituents. Outer core constituents include at least PRRT1, PRRT2, CKAMP44/SHISA9, FRRS1L and NRN1. The proteins of the inner and outer core serve as a platform for other, more peripherally associated AMPAR constituents, including LRRTM4. Alone or in combination, these auxiliary subunits control the gating and pharmacology of the AMPAR complex and profoundly impact their biogenesis and protein processing. As to expression, predominantly in the brain (at protein level). Also expressed in the cerebellum and other tissues.

It localises to the cell membrane. The protein resides in the postsynaptic cell membrane. May play a role in the development and maintenance of the vertebrate nervous system. Exhibits strong synaptogenic activity, restricted to excitatory presynaptic differentiation. This is Leucine-rich repeat transmembrane neuronal protein 4 (Lrrtm4) from Mus musculus (Mouse).